Here is a 174-residue protein sequence, read N- to C-terminus: uncharacterized protein (174 aa).

Residues 7 to 27 (LIILAIFTLWVGGFGYYLYLI) traverse the membrane as a helical segment.

The protein resides in the membrane. This is an uncharacterized protein from Rickettsia prowazekii (strain Madrid E).